A 436-amino-acid polypeptide reads, in one-letter code: tRNA-2-methylthio-N(6)-dimethylallyladenosine synthase (436 aa).

The MTTase N-terminal domain maps to Arg5–Gly121. 6 residues coordinate [4Fe-4S] cluster: Cys14, Cys50, Cys84, Cys158, Cys162, and Cys165. Residues Ala144–Ala374 enclose the Radical SAM core domain. The 63-residue stretch at Met373–Gly435 folds into the TRAM domain.

The protein belongs to the methylthiotransferase family. MiaB subfamily. As to quaternary structure, monomer. [4Fe-4S] cluster is required as a cofactor.

The protein resides in the cytoplasm. It catalyses the reaction N(6)-dimethylallyladenosine(37) in tRNA + (sulfur carrier)-SH + AH2 + 2 S-adenosyl-L-methionine = 2-methylsulfanyl-N(6)-dimethylallyladenosine(37) in tRNA + (sulfur carrier)-H + 5'-deoxyadenosine + L-methionine + A + S-adenosyl-L-homocysteine + 2 H(+). In terms of biological role, catalyzes the methylthiolation of N6-(dimethylallyl)adenosine (i(6)A), leading to the formation of 2-methylthio-N6-(dimethylallyl)adenosine (ms(2)i(6)A) at position 37 in tRNAs that read codons beginning with uridine. This chain is tRNA-2-methylthio-N(6)-dimethylallyladenosine synthase, found in Cereibacter sphaeroides (strain ATCC 17029 / ATH 2.4.9) (Rhodobacter sphaeroides).